A 379-amino-acid chain; its full sequence is Deoxyhypusine synthase (379 aa).

NAD(+) contacts are provided by residues 104-108 (SNLVS), 130-132 (TAG), glutamate 136, and aspartate 237. A spermidine-binding site is contributed by 135-136 (EE). Position 242 (aspartate 242) interacts with spermidine. Glycine 293 lines the NAD(+) pocket. Position 298 (histidine 298) interacts with spermidine. 318–319 (TA) is an NAD(+) binding site. Residues 324 to 326 (GSD) and 333 to 339 (EAVSWGK) contribute to the spermidine site. Lysine 339 serves as the catalytic Nucleophile. 352–353 (DA) provides a ligand contact to NAD(+).

This sequence belongs to the deoxyhypusine synthase family. In terms of assembly, homotetramer. NAD(+) serves as cofactor.

It carries out the reaction [eIF5A protein]-L-lysine + spermidine = [eIF5A protein]-deoxyhypusine + propane-1,3-diamine. The protein operates within protein modification; eIF5A hypusination. Functionally, catalyzes the NAD-dependent oxidative cleavage of spermidine and the subsequent transfer of the butylamine moiety of spermidine to the epsilon-amino group of a specific lysine residue of the eIF-5A precursor protein to form the intermediate deoxyhypusine residue. Also able to produce homospermidine from putrescine. This chain is Deoxyhypusine synthase (DHS1), found in Nicotiana tabacum (Common tobacco).